The following is a 186-amino-acid chain: ATP synthase subunit b (186 aa).

A helical membrane pass occupies residues 28–48; the sequence is IVWSIIPFAVILFVFAKVVLP.

The protein belongs to the ATPase B chain family. In terms of assembly, F-type ATPases have 2 components, F(1) - the catalytic core - and F(0) - the membrane proton channel. F(1) has five subunits: alpha(3), beta(3), gamma(1), delta(1), epsilon(1). F(0) has three main subunits: a(1), b(2) and c(10-14). The alpha and beta chains form an alternating ring which encloses part of the gamma chain. F(1) is attached to F(0) by a central stalk formed by the gamma and epsilon chains, while a peripheral stalk is formed by the delta and b chains.

The protein resides in the cell membrane. Functionally, f(1)F(0) ATP synthase produces ATP from ADP in the presence of a proton or sodium gradient. F-type ATPases consist of two structural domains, F(1) containing the extramembraneous catalytic core and F(0) containing the membrane proton channel, linked together by a central stalk and a peripheral stalk. During catalysis, ATP synthesis in the catalytic domain of F(1) is coupled via a rotary mechanism of the central stalk subunits to proton translocation. Its function is as follows. Component of the F(0) channel, it forms part of the peripheral stalk, linking F(1) to F(0). This chain is ATP synthase subunit b, found in Corynebacterium urealyticum (strain ATCC 43042 / DSM 7109).